A 357-amino-acid polypeptide reads, in one-letter code: MSNSIDSQSLPTVSPTDYARFDPDTIHEKLDASLSRPQLNTDGSIRHFLGIEGLNKAQLQAIIAKAESFFDDKGQLINRPELEGYTVMNLFFEPSTRTRTTFEVAEKRLGANVLNIDIERSSTKKGESLRDTLWNLQAMTADIFVVRHSASGAAHFMATEVTPDIAIINGGDGWHAHPTQGMLDMLTIHREAPRPFEELSVAIVGDIKHSRVARSDISALQTLGVKDIRVCAPRTLLPKGIERFGVQVYENMNECVTDCDVIMGLRIQNERIGSPLLASSSEYYKHYGITPERVALAKPDALVMHPGPMNRGVEIASSVADGAQSVILKQVNNGIAIRMAVLSLAMEGQRAHQAAGH.

The span at 1–15 (MSNSIDSQSLPTVSP) shows a compositional bias: polar residues. A disordered region spans residues 1–21 (MSNSIDSQSLPTVSPTDYARF). Carbamoyl phosphate-binding residues include R97 and T98. K125 is a binding site for L-aspartate. Carbamoyl phosphate-binding residues include R147, H177, and Q180. L-aspartate contacts are provided by R211 and R266. Carbamoyl phosphate is bound by residues G307 and P308.

It belongs to the aspartate/ornithine carbamoyltransferase superfamily. ATCase family. As to quaternary structure, heterododecamer (2C3:3R2) of six catalytic PyrB chains organized as two trimers (C3), and six regulatory PyrI chains organized as three dimers (R2).

The catalysed reaction is carbamoyl phosphate + L-aspartate = N-carbamoyl-L-aspartate + phosphate + H(+). It participates in pyrimidine metabolism; UMP biosynthesis via de novo pathway; (S)-dihydroorotate from bicarbonate: step 2/3. Functionally, catalyzes the condensation of carbamoyl phosphate and aspartate to form carbamoyl aspartate and inorganic phosphate, the committed step in the de novo pyrimidine nucleotide biosynthesis pathway. This chain is Aspartate carbamoyltransferase catalytic subunit, found in Psychrobacter cryohalolentis (strain ATCC BAA-1226 / DSM 17306 / VKM B-2378 / K5).